The sequence spans 348 residues: Succinylglutamate desuccinylase (348 aa).

Zn(2+) is bound by residues His-64, Glu-67, and His-164. Glu-228 is a catalytic residue.

The protein belongs to the AspA/AstE family. Succinylglutamate desuccinylase subfamily. The cofactor is Zn(2+).

The enzyme catalyses N-succinyl-L-glutamate + H2O = L-glutamate + succinate. It participates in amino-acid degradation; L-arginine degradation via AST pathway; L-glutamate and succinate from L-arginine: step 5/5. In terms of biological role, transforms N(2)-succinylglutamate into succinate and glutamate. This is Succinylglutamate desuccinylase from Shewanella amazonensis (strain ATCC BAA-1098 / SB2B).